A 422-amino-acid chain; its full sequence is Glycine amidinotransferase, mitochondrial (422 aa).

A mitochondrion-targeting transit peptide spans 1–37 (MLRVRCLRGGSRGAEAVHYIGSMLRKSFVGWVQRSFQ). Active-site residues include D253 and H302. C406 (amidino-cysteine intermediate) is an active-site residue.

Belongs to the amidinotransferase family. As to quaternary structure, homodimer. Ubiquitously expressed in adult tissues, with highest levels in muscle and intermediate levels in eye, heart, liver, stomach and testis. In stage 28 embryos, expression is higher in the dorsal and ventral parts of the trunk than in the head. In middle gastrulae, expression is highest around the yolk plug, while in stage 15 and tailbud stage embryos, expression is largely restricted to the region around the presumptive notochord and gut.

The protein localises to the mitochondrion inner membrane. The catalysed reaction is L-arginine + glycine = guanidinoacetate + L-ornithine. Its pathway is amine and polyamine biosynthesis; creatine biosynthesis; creatine from L-arginine and glycine: step 1/2. Functionally, catalyzes the biosynthesis of guanidinoacetate, the immediate precursor of creatine. Creatine plays a vital role in energy metabolism in muscle tissues. May play a role in embryonic and central nervous system development. This chain is Glycine amidinotransferase, mitochondrial, found in Xenopus laevis (African clawed frog).